The primary structure comprises 167 residues: Disulfide bond formation protein B (167 aa).

Residues 1–12 (MFLNLLDAPRRL) are Cytoplasmic-facing. Residues 13-29 (LALVALGCVALLAFGLY) form a helical membrane-spanning segment. Residues 30 to 47 (LQHVVGLEPCPMCIVQRY) are Periplasmic-facing. The cysteines at positions 39 and 42 are disulfide-linked. Residues 48–63 (ALVLVAIVAGLTAITS) form a helical membrane-spanning segment. Topologically, residues 64 to 69 (NKKGLI) are cytoplasmic. Residues 70–87 (TGSGVLLLLAGFGAFVAA) form a helical membrane-spanning segment. The Periplasmic portion of the chain corresponds to 88–143 (RQSFLQWYPPEVASCGRDFYGMIETFPLQRAIPMIFKGSGDCAKVDWTFLGGSIAN). A disulfide bridge connects residues Cys102 and Cys129. Residues 144-162 (WSFVCFAVIGLTALTLIAR) traverse the membrane as a helical segment. Residues 163–167 (LARQR) are Cytoplasmic-facing.

It belongs to the DsbB family.

The protein localises to the cell inner membrane. In terms of biological role, required for disulfide bond formation in some periplasmic proteins. Acts by oxidizing the DsbA protein. This is Disulfide bond formation protein B from Polaromonas naphthalenivorans (strain CJ2).